A 266-amino-acid polypeptide reads, in one-letter code: ATG8-interacting protein 2 (266 aa).

Positions 14–17 match the AIM (Atg8-family-interacting motif) motif; it reads WEVV. A helical membrane pass occupies residues 191–210; it reads TNTVWSICIAAAVMGIVILG. Positions 218–221 match the AIM (Atg8-family-interacting motif) motif; that stretch reads WQIL.

Interacts with ATG8F.

It localises to the endoplasmic reticulum membrane. The protein resides in the membrane. In terms of biological role, may be involved in salt stress-induced vesicle-to-vacuole trafficking pathway. Through its interaction with ATG8F, may enable delivery of the vesicle bodies to the vacuole by an autophagic pathway. Plays a role in seed germination in response to exogenous abscisic acid (ABA) treatment. This is ATG8-interacting protein 2 from Arabidopsis thaliana (Mouse-ear cress).